Reading from the N-terminus, the 394-residue chain is MADGAGIDRKADEKIQFSTSKEVTVHPTFESMSLKESLLRGIYAYGYESPSAVQSRAIVQICKGRDTIAQAQSGTGKTATFSISMLQVIDTAVRETQALVLSPTRELATQIQSVVMALGDYMNVQCHACIGGTNVGEDIRKLDYGQHIVSGTPGRVADMIRRRHLRTRHIKMLVLDEADELLNQGFREQIYDVYRYLPPATQVVVVSATLPYDVLDMTTKFMTDPVRILVKRDELTLEGLKQYFIAVEKEDWKFDTLCDLYDTLTITQAVIFCNTRRKVDWLTDKMREANFTVSSMHGDMPQKERDSIMQDFRQGNSRVLISTDVWARGIDVQQVSLVINYDLPSNRENYIHRIGRSGRFGRKGVAINFVTSEDVRILRDIECMWLPSPCFSCG.

The Q motif motif lies at 27–55; that stretch reads PTFESMSLKESLLRGIYAYGYESPSAVQS. The Helicase ATP-binding domain maps to 58–228; that stretch reads IVQICKGRDT…TKFMTDPVRI (171 aa). ATP is bound at residue 71–78; that stretch reads AQSGTGKT. The DEAD box motif lies at 176 to 179; that stretch reads DEAD. The 156-residue stretch at 239–394 folds into the Helicase C-terminal domain; that stretch reads GLKQYFIAVE…WLPSPCFSCG (156 aa).

This sequence belongs to the DEAD box helicase family. DDX48/FAL1 subfamily.

The protein localises to the nucleus. It is found in the nucleolus. It carries out the reaction ATP + H2O = ADP + phosphate + H(+). In terms of biological role, ATP-dependent RNA helicase involved in 40S ribosomal subunit biogenesis. Required for the processing and cleavage of 35S pre-rRNA at sites A0, A1, and A2, leading to mature 18S rRNA. The sequence is that of ATP-dependent RNA helicase FAL1 (FAL1) from Chaetomium globosum (strain ATCC 6205 / CBS 148.51 / DSM 1962 / NBRC 6347 / NRRL 1970) (Soil fungus).